The following is a 294-amino-acid chain: Glutamyl-Q tRNA(Asp) synthetase (294 aa).

L-glutamate contacts are provided by residues 8-12 (RFAPT) and glutamate 44. The 'HIGH' region signature appears at 11–21 (PTPSGYLHFGS). Cysteine 100, cysteine 102, tyrosine 114, and cysteine 118 together coordinate Zn(2+). Tyrosine 171 and arginine 189 together coordinate L-glutamate. Positions 227-231 (KLGKS) match the 'KMSKS' region motif. Residue lysine 230 coordinates ATP.

It belongs to the class-I aminoacyl-tRNA synthetase family. GluQ subfamily. The cofactor is Zn(2+).

Its function is as follows. Catalyzes the tRNA-independent activation of glutamate in presence of ATP and the subsequent transfer of glutamate onto a tRNA(Asp). Glutamate is transferred on the 2-amino-5-(4,5-dihydroxy-2-cyclopenten-1-yl) moiety of the queuosine in the wobble position of the QUC anticodon. The chain is Glutamyl-Q tRNA(Asp) synthetase from Ectopseudomonas mendocina (strain ymp) (Pseudomonas mendocina).